We begin with the raw amino-acid sequence, 1091 residues long: Sodium/potassium exporting P-type ATPase 5 (1091 aa).

The Cytoplasmic portion of the chain corresponds to 1–63; it reads MSEGTVKENN…LGDDTKIDYK (63 aa). The helical transmembrane segment at 64-84 threads the bilayer; that stretch reads AMVLHQVCNAMIMVLVISMAI. Topologically, residues 85-90 are extracellular; the sequence is SFAVRD. A helical membrane pass occupies residues 91–111; that stretch reads WITGGVISFVIAVNVLIGLVQ. Residues 112–282 are Cytoplasmic-facing; it reads EYKATKTMNS…TNVGTPLHRK (171 aa). A helical transmembrane segment spans residues 283–303; that stretch reads LSKLAVLLFWIAVLFAIIVMA. The Extracellular segment spans residues 304–312; it reads SQKFDVDKR. The chain crosses the membrane as a helical span at residues 313–333; the sequence is VAIYAICVALSMIPSSLVVVL. Over 334 to 815 the chain is Cytoplasmic; it reads TITMSVGAAV…RRMTDNIQKF (482 aa). Asp369 serves as the catalytic 4-aspartylphosphate intermediate. Positions 369 and 371 each coordinate Mg(2+). ATP-binding residues include Thr371 and Glu483. A disordered region spans residues 499–525; sequence ALTGEKSTNQSNENDQSSLSQHNEKPG. Over residues 503 to 519 the composition is skewed to polar residues; the sequence is EKSTNQSNENDQSSLSQ. The ATP site is built by Lys561, Arg606, Thr673, Gly674, Asp675, Arg732, and Lys738. Mg(2+) is bound at residue Asp757. ATP is bound at residue Asn760. The helical transmembrane segment at 816-836 threads the bilayer; it reads VLQLLAENVAQALYLIIGLVF. The Extracellular segment spans residues 837 to 848; that stretch reads RDENGKSVFPLS. A helical transmembrane segment spans residues 849-869; sequence PVEVLWIIVVTSCFPAMGLGL. The Cytoplasmic segment spans residues 870–885; that stretch reads EKAAPDLMDRPPNDSE. A helical transmembrane segment spans residues 886–906; the sequence is VGIFTWEVIIDTFAYGIIMTG. Topologically, residues 907-943 are extracellular; it reads SCMASFTGSLYGINSGRLGHDCDGTYNSSCRDVYRSR. Residues 944–964 form a helical membrane-spanning segment; sequence SAAFATMTWCALILAWEVVDM. Residues 965-991 are Cytoplasmic-facing; that stretch reads RRSFFRMHPDTDSPVKEFFRSIWGNQF. A helical membrane pass occupies residues 992 to 1012; the sequence is LFWSIIFGFVSAFPVVYIPVI. Residues 1013 to 1021 are Extracellular-facing; the sequence is NDKVFLHKP. Residues 1022-1042 form a helical membrane-spanning segment; it reads IGAEWGLAIAFTIAFWIGAEL. Over 1043-1091 the chain is Cytoplasmic; it reads YKCGKRRYFKTQRAHNSENDLERSSKHDPFEAYSTSTTLQSEINISVKH.

It belongs to the cation transport ATPase (P-type) (TC 3.A.3) family. Type IID subfamily. Requires Mg(2+) as cofactor. In terms of processing, the active site is phosphorylated in presence of sodium or potassium and in conditions of higher pH. Not phosphorylated in presence of calcium ions.

It is found in the cell membrane. The enzyme catalyses Na(+)(in) + ATP + H2O = Na(+)(out) + ADP + phosphate + H(+). The catalysed reaction is K(+)(in) + ATP + H2O = K(+)(out) + ADP + phosphate + H(+). In terms of biological role, catalyzes the hydrolysis of ATP coupled with the export of sodium and potassium from the cell. May export potassium less efficiently. May transport other cations such as lithium. Sodium/potassium efflux ATPases are involved in salt tolerance and maintaining the membrane potential across the plasma membrane in high salinity (Na+) or alkaline (K+) environments. The polypeptide is Sodium/potassium exporting P-type ATPase 5 (Saccharomyces cerevisiae (strain ATCC 204508 / S288c) (Baker's yeast)).